We begin with the raw amino-acid sequence, 396 residues long: Phosphoglycerate kinase (396 aa).

Residues 21-23 (DFN), R36, 59-62 (HLGK), R119, and R156 contribute to the substrate site. ATP is bound by residues K206, G294, E325, and 352–355 (GGDS).

The protein belongs to the phosphoglycerate kinase family. As to quaternary structure, monomer.

It is found in the cytoplasm. The catalysed reaction is (2R)-3-phosphoglycerate + ATP = (2R)-3-phospho-glyceroyl phosphate + ADP. It participates in carbohydrate degradation; glycolysis; pyruvate from D-glyceraldehyde 3-phosphate: step 2/5. In Staphylococcus aureus (strain USA300), this protein is Phosphoglycerate kinase.